Reading from the N-terminus, the 1035-residue chain is Probable LRR receptor-like serine/threonine-protein kinase At1g53440 (1035 aa).

A signal peptide spans 1–26; the sequence is MGFFFSTRKGLLLIIFICLDIFGSNA. Residues 27–607 lie on the Extracellular side of the membrane; the sequence is QLLPEDEVQT…VDTGKPLSNG (581 aa). Asn-46, Asn-75, Asn-83, and Asn-110 each carry an N-linked (GlcNAc...) asparagine glycan. LRR repeat units follow at residues 87–110, 111–135, 137–158, 160–182, 183–206, 208–232, and 234–254; these read VCRV…EFGN, LTRL…LSQI, LEIL…LGQI, TLTD…LGNL, RSLK…LSNL, NLTN…NWTR, and VRLD…ISNL. N-linked (GlcNAc...) asparagine glycans are attached at residues Asn-194, Asn-208, and Asn-229. Residues Asn-256 and Asn-277 are each glycosylated (N-linked (GlcNAc...) asparagine). LRR repeat units lie at residues 278-302, 303-326, 328-349, and 350-372; these read MTNM…IGTS, MTML…TFRS, NAFN…QFIL, and DSKQ…SCNQ. Residues Asn-317, Asn-337, Asn-361, Asn-386, Asn-469, and Asn-559 are each glycosylated (N-linked (GlcNAc...) asparagine). The helical transmembrane segment at 608-628 threads the bilayer; the sequence is VVAGIVIAACVAFGLLVLVIL. Residues 629–1035 lie on the Cytoplasmic side of the membrane; that stretch reads RLTGYLGGKE…LDDLTDVEIE (407 aa). The residue at position 656 (Thr-656) is a Phosphothreonine. The Protein kinase domain occupies 667–948; that stretch reads FDPENKIGEG…QGKIKVQPPL (282 aa). Residues 673–681 and Lys-695 contribute to the ATP site; that span reads IGEGGFGPV. Tyr-740 bears the Phosphotyrosine mark. Asp-793 functions as the Proton acceptor in the catalytic mechanism. Ser-826 carries the phosphoserine modification. Thr-827 and Thr-832 each carry phosphothreonine. A Phosphotyrosine modification is found at Tyr-840. The segment at 969–1035 is disordered; sequence LSQDSESQVS…LDDLTDVEIE (67 aa). A compositionally biased stretch (polar residues) spans 972–981; it reads DSESQVSTYT. The span at 1009–1023 shows a compositional bias: low complexity; that stretch reads SLLQQEEGNSSSSSR.

Belongs to the protein kinase superfamily. Ser/Thr protein kinase family.

Its subcellular location is the cell membrane. It catalyses the reaction L-seryl-[protein] + ATP = O-phospho-L-seryl-[protein] + ADP + H(+). It carries out the reaction L-threonyl-[protein] + ATP = O-phospho-L-threonyl-[protein] + ADP + H(+). This is Probable LRR receptor-like serine/threonine-protein kinase At1g53440 from Arabidopsis thaliana (Mouse-ear cress).